Reading from the N-terminus, the 417-residue chain is Putative UDP-arabinose 4-epimerase 2 (417 aa).

Residues 1-31 lie on the Cytoplasmic side of the membrane; the sequence is MLNLGRARTGRQNRSMSFEGLDFADPKKNNN. Residues 32–54 traverse the membrane as a helical; Signal-anchor for type II membrane protein segment; sequence YMGKIVLVMTLTAMCILLLNQSP. Residues 55–417 are Lumenal-facing; sequence TFNTPSVFSR…YGSSSLVSAY (363 aa). 71-102 contacts NAD(+); that stretch reads HVLVTGGAGYIGSHAALRLLKDSYRVTIVDNL. Residue Y219 is the Proton acceptor of the active site.

It belongs to the NAD(P)-dependent epimerase/dehydratase family. The cofactor is NAD(+).

Its subcellular location is the golgi apparatus. It localises to the golgi stack membrane. The enzyme catalyses UDP-beta-L-arabinopyranose = UDP-alpha-D-xylose. The protein operates within nucleotide-sugar biosynthesis; UDP-L-arabinose biosynthesis; UDP-L-arabinose from UDP-alpha-D-xylose: step 1/1. It functions in the pathway cell wall biogenesis; cell wall polysaccharide biosynthesis. The sequence is that of Putative UDP-arabinose 4-epimerase 2 from Arabidopsis thaliana (Mouse-ear cress).